We begin with the raw amino-acid sequence, 198 residues long: tRNA (pseudouridine(54)-N(1))-methyltransferase (198 aa).

Leu134 and Gly155 together coordinate S-adenosyl-L-methionine.

It belongs to the methyltransferase superfamily. TrmY family. In terms of assembly, homodimer.

The protein localises to the cytoplasm. It carries out the reaction pseudouridine(54) in tRNA + S-adenosyl-L-methionine = N(1)-methylpseudouridine(54) in tRNA + S-adenosyl-L-homocysteine + H(+). Functionally, specifically catalyzes the N1-methylation of pseudouridine at position 54 (Psi54) in tRNAs. The protein is tRNA (pseudouridine(54)-N(1))-methyltransferase of Thermococcus kodakarensis (strain ATCC BAA-918 / JCM 12380 / KOD1) (Pyrococcus kodakaraensis (strain KOD1)).